Reading from the N-terminus, the 40-residue chain is Photosystem II reaction center protein L (40 aa).

A helical transmembrane segment spans residues 19–39 (SLFLGLLLVFVLGILFSSYFF).

It belongs to the PsbL family. In terms of assembly, PSII is composed of 1 copy each of membrane proteins PsbA, PsbB, PsbC, PsbD, PsbE, PsbF, PsbH, PsbI, PsbJ, PsbK, PsbL, PsbM, PsbT, PsbX, PsbY, PsbZ, Psb30/Ycf12, peripheral proteins PsbO, CyanoQ (PsbQ), PsbU, PsbV and a large number of cofactors. It forms dimeric complexes.

It is found in the cellular thylakoid membrane. Functionally, one of the components of the core complex of photosystem II (PSII). PSII is a light-driven water:plastoquinone oxidoreductase that uses light energy to abstract electrons from H(2)O, generating O(2) and a proton gradient subsequently used for ATP formation. It consists of a core antenna complex that captures photons, and an electron transfer chain that converts photonic excitation into a charge separation. This subunit is found at the monomer-monomer interface and is required for correct PSII assembly and/or dimerization. The sequence is that of Photosystem II reaction center protein L from Synechococcus elongatus (strain ATCC 33912 / PCC 7942 / FACHB-805) (Anacystis nidulans R2).